A 119-amino-acid chain; its full sequence is Large ribosomal subunit protein uL18 (119 aa).

It belongs to the universal ribosomal protein uL18 family. Part of the 50S ribosomal subunit; part of the 5S rRNA/L5/L18/L25 subcomplex. Contacts the 5S and 23S rRNAs.

In terms of biological role, this is one of the proteins that bind and probably mediate the attachment of the 5S RNA into the large ribosomal subunit, where it forms part of the central protuberance. In Micrococcus luteus (Micrococcus lysodeikticus), this protein is Large ribosomal subunit protein uL18.